Here is a 154-residue protein sequence, read N- to C-terminus: Ubiquitin-like protein 4A (154 aa).

The region spanning 1–76 (MILTVKPLQG…LNLVVRPAGE (76 aa)) is the Ubiquitin-like domain.

As to quaternary structure, component of the bag6/bat3 complex.

The protein localises to the cytoplasm. The protein resides in the cytosol. It localises to the nucleus. In terms of biological role, as part of a cytosolic protein quality control complex, the bag6/bat3 complex, maintains misfolded and hydrophobic patches-containing proteins in a soluble state and participates in their proper delivery to the endoplasmic reticulum or alternatively can promote their sorting to the proteasome where they undergo degradation. The bag6/bat3 complex is involved in the post-translational delivery of tail-anchored/type II transmembrane proteins to the endoplasmic reticulum membrane. Similarly, the bag6/bat3 complex also functions as a sorting platform for proteins of the secretory pathway that are mislocalized to the cytosol either delivering them to the proteasome for degradation or to the endoplasmic reticulum. The bag6/bat3 complex also plays a role in the endoplasmic reticulum-associated degradation (ERAD), a quality control mechanism that eliminates unwanted proteins of the endoplasmic reticulum through their retrotranslocation to the cytosol and their targeting to the proteasome. It maintains these retrotranslocated proteins in an unfolded yet soluble state condition in the cytosol to ensure their proper delivery to the proteasome. The polypeptide is Ubiquitin-like protein 4A (ubl4a) (Esox lucius (Northern pike)).